The chain runs to 90 residues: Phenol 2-monooxygenase, stimulatory component DmpM (90 aa).

This sequence belongs to the TmoD/XamoD family. Active as a monomer. Formation of dimers inactivates the protein. The multicomponent enzyme phenol hydroxylase is formed by DmpL (P1 component), DmpM (P2 component), DmpN (P3 component), DmpO (P4 component) and DmpP (P5 component).

The catalysed reaction is phenol + NADH + O2 + H(+) = catechol + NAD(+) + H2O. It functions in the pathway aromatic compound metabolism; phenol degradation. Functionally, part of a multicomponent enzyme which catalyzes the degradation of phenol and some of its methylated derivatives. DmpM is a regulatory subunit that stimulates the phenol hydroxylase activity of the complex. The steady-state rate of phenol hydroxylase turnover is dependent on the DmpM concentration, with a maximum observed rate at about 1.5 DmpM per oxygenase monomer. Higher concentrations of DmpM inhibit phenol hydroxylase activity. May act by altering the redox potential of the oxygenase. Required for growth on phenol and for in vitro phenol hydroxylase activity. The sequence is that of Phenol 2-monooxygenase, stimulatory component DmpM from Pseudomonas sp. (strain CF600).